The primary structure comprises 166 residues: Regulatory protein RecX (166 aa).

It belongs to the RecX family.

Its subcellular location is the cytoplasm. Its function is as follows. Modulates RecA activity. The polypeptide is Regulatory protein RecX (Escherichia fergusonii (strain ATCC 35469 / DSM 13698 / CCUG 18766 / IAM 14443 / JCM 21226 / LMG 7866 / NBRC 102419 / NCTC 12128 / CDC 0568-73)).